The following is a 284-amino-acid chain: Bifunctional protein FolD 1 (284 aa).

NADP(+) contacts are provided by residues 166–168, S191, and I232; that span reads GAS.

Belongs to the tetrahydrofolate dehydrogenase/cyclohydrolase family. As to quaternary structure, homodimer.

The enzyme catalyses (6R)-5,10-methylene-5,6,7,8-tetrahydrofolate + NADP(+) = (6R)-5,10-methenyltetrahydrofolate + NADPH. It catalyses the reaction (6R)-5,10-methenyltetrahydrofolate + H2O = (6R)-10-formyltetrahydrofolate + H(+). It participates in one-carbon metabolism; tetrahydrofolate interconversion. Its function is as follows. Catalyzes the oxidation of 5,10-methylenetetrahydrofolate to 5,10-methenyltetrahydrofolate and then the hydrolysis of 5,10-methenyltetrahydrofolate to 10-formyltetrahydrofolate. The chain is Bifunctional protein FolD 1 from Hydrogenovibrio crunogenus (strain DSM 25203 / XCL-2) (Thiomicrospira crunogena).